Reading from the N-terminus, the 89-residue chain is MRELDREELNCVGGAGDPLADPNSQIVRQIMSNAAWGAAFGARGGLGGMAVGAAGGVTQTVLQGAAAHMPVNVPIPKVPMGPSWNGSKG.

An N-terminal signal peptide occupies residues 1–15; that stretch reads MRELDREELNCVGGA.

It belongs to the class IIa microcin family. In terms of processing, mass spectrometry suggests 3 of the 4 Met residues of the mature peptide are oxidized.

It is found in the secreted. Its function is as follows. Active against E.coli and Salmonella, but not Listeria or Campylobacter. Channel-forming microcin. Probably neutralized by its immunity protein McnI. The protein is Microcin N of Escherichia coli.